Here is a 678-residue protein sequence, read N- to C-terminus: ABC transporter B family member 6 (678 aa).

Transmembrane regions (helical) follow at residues 95 to 115, 128 to 148, 206 to 226, 230 to 250, 314 to 334, and 346 to 366; these read IILCVSIIFFSKLINLSVPLI, EWHLLILYGVLFLIQKSIWDI, LLFNIFPTLVELFTVSTFLLF, AEFAFINLTSCVVYIAFTLYV, FLLNFGQSSIIVIGTTLGLGL, and LGDVIAINTFIAQMFSPLSWL. The region spanning 95-375 is the ABC transmembrane type-1 domain; the sequence is IILCVSIIFF…LGSSYRMILT (281 aa). The 243-residue stretch at 418 to 660 folds into the ABC transporter domain; it reads IEFRNISFTY…NGDYAHLWNQ (243 aa). Residues Y427 and 459–470 contribute to the ATP site; that span reads GSTGGGKSTIFR.

The protein belongs to the ABC transporter superfamily. ABCB family. Heavy Metal importer (TC 3.A.1.210) subfamily.

The protein localises to the membrane. In Dictyostelium discoideum (Social amoeba), this protein is ABC transporter B family member 6 (abcB6).